We begin with the raw amino-acid sequence, 303 residues long: Probable 5-dehydro-4-deoxyglucarate dehydratase (303 aa).

The protein belongs to the DapA family.

It carries out the reaction 5-dehydro-4-deoxy-D-glucarate + H(+) = 2,5-dioxopentanoate + CO2 + H2O. It participates in carbohydrate acid metabolism; D-glucarate degradation; 2,5-dioxopentanoate from D-glucarate: step 2/2. The chain is Probable 5-dehydro-4-deoxyglucarate dehydratase from Ectopseudomonas mendocina (strain ymp) (Pseudomonas mendocina).